The chain runs to 617 residues: Sodium-coupled monocarboxylate transporter 2 (617 aa).

The Extracellular segment spans residues 1 to 5 (MEVKN). A helical membrane pass occupies residues 6–26 (FAVWDYVVFAALFIISSGIGV). The Cytoplasmic portion of the chain corresponds to 27–47 (FYAIKERKKATSREFLVGGRQ). The helical transmembrane segment at 48–68 (MSFGPVALSLTASFMSAVTVL) threads the bilayer. The Extracellular segment spans residues 69–80 (GTPADVYRFGAS). The helical transmembrane segment at 81–101 (FVLFFITYGLVIILTSELFLP) threads the bilayer. The Cytoplasmic segment spans residues 102 to 128 (VFYRSGITSTYEYLQLRFNKPVRYAAT). The chain crosses the membrane as a helical span at residues 129–149 (VIYIVQTILYTGVVVYAPALA). At 150 to 157 (LNQVTGFD) the chain is on the extracellular side. A helical membrane pass occupies residues 158-178 (LWGSVFATGIVCTFYCTLGGL). The Cytoplasmic segment spans residues 179–180 (KA). A helical membrane pass occupies residues 181–201 (VVWTDAFQMVVMIVGFLTVLI). Topologically, residues 202–235 (QGSTYAGGLHNVLEQAENGSRLNIFDFDIDPLRR) are extracellular. N-linked (GlcNAc...) asparagine glycosylation occurs at N219. Residues 236-256 (HTFWTISVGGTFTWLGIYGVN) form a helical membrane-spanning segment. The Cytoplasmic portion of the chain corresponds to 257-273 (QSTIQRCISCKTEKHAK). The helical transmembrane segment at 274–294 (LALYFNLLGLWIILLCAVFSG) threads the bilayer. Residues 295–334 (LTMYAHFKDCDPWTSGIISAPDQLMPYFVMELFSTMPGLP) lie on the Extracellular side of the membrane. The chain crosses the membrane as a helical span at residues 335–357 (GLFVACAFSGTLSTVAASINALA). Topologically, residues 358–385 (TVTFEDFVKSCFPRLSDKLSTWISKGLC) are cytoplasmic. Residues 386–406 (LLFGVICTSTAVAASLMGGVI) form a helical membrane-spanning segment. The Extracellular portion of the chain corresponds to 407-411 (QAALS). Residues 412 to 432 (IHGMCGGPMLGLFSLGILFPF) traverse the membrane as a helical segment. Topologically, residues 433-437 (VNWKG) are cytoplasmic. A helical membrane pass occupies residues 438–458 (ALAGLLTGILLSFWVAIGAFI). Over 459 to 507 (YPAPASKTWPLPLSTDQCGLSNVTESVPPVLSSRPAIAETWYALSYLHY) the chain is Extracellular. N480 carries an N-linked (GlcNAc...) asparagine glycan. A helical transmembrane segment spans residues 508 to 528 (STVGCLGCIAAGVIISFLTGL). The Cytoplasmic portion of the chain corresponds to 529 to 617 (QKGKDIPPLL…NMALEKITHF (89 aa)).

The protein belongs to the sodium:solute symporter (SSF) (TC 2.A.21) family.

It localises to the apical cell membrane. The enzyme catalyses (S)-lactate(out) + Na(+)(out) = (S)-lactate(in) + Na(+)(in). The catalysed reaction is nicotinate(out) + Na(+)(out) = nicotinate(in) + Na(+)(in). It catalyses the reaction pyruvate(out) + Na(+)(out) = pyruvate(in) + Na(+)(in). It carries out the reaction propanoate(out) + Na(+)(out) = propanoate(in) + Na(+)(in). The enzyme catalyses butanoate(out) + Na(+)(out) = butanoate(in) + Na(+)(in). The catalysed reaction is acetoacetate(out) + Na(+)(out) = acetoacetate(in) + Na(+)(in). Functionally, acts as an electroneutral and low-affinity sodium (Na(+))-dependent sodium-coupled solute transporter. Catalyzes the transport across the plasma membrane of many monocarboxylates such as lactate, pyruvate, nicotinate, propionate, butyrate and beta-D-hydroxybutyrate. May be responsible for the first step of reabsorption of monocarboxylates from the lumen of the proximal tubule of the kidney and the small intestine. May play also a role in monocarboxylates transport in the retina. Mediates electroneutral uptake of lactate, with a stoichiometry of 2 Na(+) for each lactate. In Bos taurus (Bovine), this protein is Sodium-coupled monocarboxylate transporter 2 (SLC5A12).